Reading from the N-terminus, the 451-residue chain is Glucose-6-phosphate isomerase (451 aa).

Glu291 functions as the Proton donor in the catalytic mechanism. Residues His312 and Lys426 contribute to the active site.

Belongs to the GPI family.

It localises to the cytoplasm. It catalyses the reaction alpha-D-glucose 6-phosphate = beta-D-fructose 6-phosphate. Its pathway is carbohydrate biosynthesis; gluconeogenesis. It participates in carbohydrate degradation; glycolysis; D-glyceraldehyde 3-phosphate and glycerone phosphate from D-glucose: step 2/4. In terms of biological role, catalyzes the reversible isomerization of glucose-6-phosphate to fructose-6-phosphate. This Thermoanaerobacter sp. (strain X514) protein is Glucose-6-phosphate isomerase.